The chain runs to 394 residues: Methylthioribose kinase (394 aa).

Residues Asn44, Lys61, and 115–117 (EDL) each bind ATP. Asp233 lines the substrate pocket. ATP is bound at residue 250–252 (DPE). Residue Arg337 coordinates substrate.

The protein belongs to the methylthioribose kinase family. In terms of assembly, homodimer.

The enzyme catalyses 5-(methylsulfanyl)-D-ribose + ATP = 5-(methylsulfanyl)-alpha-D-ribose 1-phosphate + ADP + H(+). It participates in amino-acid biosynthesis; L-methionine biosynthesis via salvage pathway; S-methyl-5-thio-alpha-D-ribose 1-phosphate from S-methyl-5'-thioadenosine (hydrolase route): step 2/2. Functionally, catalyzes the phosphorylation of methylthioribose into methylthioribose-1-phosphate. The chain is Methylthioribose kinase from Bacillus velezensis (strain DSM 23117 / BGSC 10A6 / LMG 26770 / FZB42) (Bacillus amyloliquefaciens subsp. plantarum).